The sequence spans 210 residues: Peroxiredoxin-5, mitochondrial (210 aa).

Residues 1–48 (MLQLGLRVLGCKASSVLRASTCLAGRAGRKEAGWECGGARSFSSSAVT) constitute a mitochondrion transit peptide. The Thioredoxin domain maps to 52–210 (IKVGDAIPSV…SLAPNILSQL (159 aa)). The residue at position 70 (lysine 70) is an N6-acetyllysine; alternate. The residue at position 70 (lysine 70) is an N6-succinyllysine; alternate. Lysine 71 carries the N6-acetyllysine modification. The residue at position 79 (lysine 79) is an N6-acetyllysine; alternate. Lysine 79 carries the N6-succinyllysine; alternate modification. Residue cysteine 96 is the Cysteine sulfenic acid (-SOH) intermediate of the active site. The S-palmitoyl cysteine moiety is linked to residue cysteine 96. A disulfide bridge links cysteine 96 with cysteine 200. Lysine 112 carries the N6-succinyllysine modification. 2 positions are modified to phosphoserine: serine 167 and serine 178. Positions 208-210 (SQL) match the Microbody targeting signal motif.

It belongs to the peroxiredoxin family. Prx5 subfamily. As to quaternary structure, monomer. In terms of processing, S-palmitoylated. Palmitoylation occurs on the active site, inhibiting its reactivity; therefore PRDX5 palmitoylation status determines its antioxidant capacity. Post-translationally, S-palmitoylated. Depalmitoylated by ABHD10. In terms of tissue distribution, widely expressed.

Its subcellular location is the mitochondrion. The protein resides in the cytoplasm. The protein localises to the peroxisome matrix. It carries out the reaction a hydroperoxide + [thioredoxin]-dithiol = an alcohol + [thioredoxin]-disulfide + H2O. Its function is as follows. Thiol-specific peroxidase that catalyzes the reduction of hydrogen peroxide and organic hydroperoxides to water and alcohols, respectively. Plays a role in cell protection against oxidative stress by detoxifying peroxides and as sensor of hydrogen peroxide-mediated signaling events. This chain is Peroxiredoxin-5, mitochondrial, found in Mus musculus (Mouse).